The following is a 129-amino-acid chain: MLMMSIILSMCIQMIRIKSGLSSVICVYSQMNNFRIFWWDIMTAFEELLELPTIEAIYKLKKLILKMESSKNSEVYYYQGVIKRIIQRLSLLDQEKSLKENLKFCVDNYILSQRTIEDLKTAIEIASKL.

This is an uncharacterized protein from Methanocaldococcus jannaschii (strain ATCC 43067 / DSM 2661 / JAL-1 / JCM 10045 / NBRC 100440) (Methanococcus jannaschii).